Here is a 362-residue protein sequence, read N- to C-terminus: Holliday junction branch migration complex subunit RuvB (362 aa).

Positions 1–20 (MKRTIMTNTDTFEQPNTGAN) are disordered. Residues 15–203 (PNTGANEESL…FGFTAHLDFY (189 aa)) form a large ATPase domain (RuvB-L) region. Residues Leu-42, Arg-43, Gly-84, Lys-87, Thr-88, Thr-89, 150 to 152 (EDF), Arg-193, Tyr-203, and Arg-240 each bind ATP. Thr-88 is a Mg(2+) binding site. The tract at residues 204–274 (PHEELEKLIE…DVKEALALYQ (71 aa)) is small ATPAse domain (RuvB-S). The segment at 277–362 (TEGLDRLDIA…ESAYDVNEMS (86 aa)) is head domain (RuvB-H). Residues Arg-332 and Arg-337 each contribute to the DNA site.

It belongs to the RuvB family. As to quaternary structure, homohexamer. Forms an RuvA(8)-RuvB(12)-Holliday junction (HJ) complex. HJ DNA is sandwiched between 2 RuvA tetramers; dsDNA enters through RuvA and exits via RuvB. An RuvB hexamer assembles on each DNA strand where it exits the tetramer. Each RuvB hexamer is contacted by two RuvA subunits (via domain III) on 2 adjacent RuvB subunits; this complex drives branch migration. In the full resolvosome a probable DNA-RuvA(4)-RuvB(12)-RuvC(2) complex forms which resolves the HJ.

The protein resides in the cytoplasm. It carries out the reaction ATP + H2O = ADP + phosphate + H(+). The RuvA-RuvB-RuvC complex processes Holliday junction (HJ) DNA during genetic recombination and DNA repair, while the RuvA-RuvB complex plays an important role in the rescue of blocked DNA replication forks via replication fork reversal (RFR). RuvA specifically binds to HJ cruciform DNA, conferring on it an open structure. The RuvB hexamer acts as an ATP-dependent pump, pulling dsDNA into and through the RuvAB complex. RuvB forms 2 homohexamers on either side of HJ DNA bound by 1 or 2 RuvA tetramers; 4 subunits per hexamer contact DNA at a time. Coordinated motions by a converter formed by DNA-disengaged RuvB subunits stimulates ATP hydrolysis and nucleotide exchange. Immobilization of the converter enables RuvB to convert the ATP-contained energy into a lever motion, pulling 2 nucleotides of DNA out of the RuvA tetramer per ATP hydrolyzed, thus driving DNA branch migration. The RuvB motors rotate together with the DNA substrate, which together with the progressing nucleotide cycle form the mechanistic basis for DNA recombination by continuous HJ branch migration. Branch migration allows RuvC to scan DNA until it finds its consensus sequence, where it cleaves and resolves cruciform DNA. This is Holliday junction branch migration complex subunit RuvB from Bifidobacterium adolescentis (strain ATCC 15703 / DSM 20083 / NCTC 11814 / E194a).